A 757-amino-acid chain; its full sequence is Probable inorganic carbon transporter subunit DabA (757 aa).

4 residues coordinate Zn(2+): Cys321, Asp323, His475, and Cys490.

The protein belongs to the inorganic carbon transporter (TC 9.A.2) DabA family. As to quaternary structure, forms a complex with DabB. Zn(2+) is required as a cofactor.

Its subcellular location is the cell inner membrane. Functionally, part of an energy-coupled inorganic carbon pump. In Idiomarina loihiensis (strain ATCC BAA-735 / DSM 15497 / L2-TR), this protein is Probable inorganic carbon transporter subunit DabA.